We begin with the raw amino-acid sequence, 171 residues long: Ribosome maturation factor RimM (171 aa).

Residues Glu97–Leu170 enclose the PRC barrel domain.

The protein belongs to the RimM family. Binds ribosomal protein uS19.

The protein resides in the cytoplasm. In terms of biological role, an accessory protein needed during the final step in the assembly of 30S ribosomal subunit, possibly for assembly of the head region. Essential for efficient processing of 16S rRNA. May be needed both before and after RbfA during the maturation of 16S rRNA. It has affinity for free ribosomal 30S subunits but not for 70S ribosomes. The sequence is that of Ribosome maturation factor RimM from Bacillus thuringiensis (strain Al Hakam).